Reading from the N-terminus, the 143-residue chain is Putative pre-16S rRNA nuclease (143 aa).

The protein belongs to the YqgF nuclease family.

It localises to the cytoplasm. Could be a nuclease involved in processing of the 5'-end of pre-16S rRNA. The sequence is that of Putative pre-16S rRNA nuclease (ybeB) from Lactococcus lactis subsp. lactis (strain IL1403) (Streptococcus lactis).